Reading from the N-terminus, the 306-residue chain is Palmitoyl-protein thioesterase 1 (306 aa).

Positions 1–27 (MASPGCLWLLAVALLPWTCASRALQHL) are cleaved as a signal peptide. A lipid anchor (S-palmitoyl cysteine; by ZDHHC3 and ZDHHC7) is attached at Cys-6. 3 disulfide bridges follow: Cys-45-Cys-46, Cys-96-Cys-128, and Cys-152-Cys-160. Ser-115 is a catalytic residue. 3 N-linked (GlcNAc...) asparagine glycosylation sites follow: Asn-197, Asn-212, and Asn-232. Residues Asp-233 and His-289 contribute to the active site.

The protein belongs to the palmitoyl-protein thioesterase family. Interacts with CLN5. Interacts with ATP5F1A and ATP5F1B. In terms of processing, glycosylated.

It localises to the lysosome. Its subcellular location is the secreted. It is found in the golgi apparatus. The protein resides in the endoplasmic reticulum. The enzyme catalyses S-hexadecanoyl-L-cysteinyl-[protein] + H2O = L-cysteinyl-[protein] + hexadecanoate + H(+). The catalysed reaction is hexadecanoyl-CoA + H2O = hexadecanoate + CoA + H(+). It catalyses the reaction S-hexadecanoyl-N-acetylcysteamine + H2O = N-acetylcysteamine + hexadecanoate + H(+). It carries out the reaction S-hexadecanoyl-N-acetylcysteine methyl ester + H2O = N-acetylcysteine methyl ester + hexadecanoate + H(+). Palmitoylation reduces PPT1 enzymatic activity. In terms of biological role, has thioesterase activity against fatty acid thioesters with 14 -18 carbons, including palmitoyl-CoA, S-palmitoyl-N-acetylcysteamine, and palmitoylated proteins. In contrast to PPT2, PPT1 can hydrolyze palmitoylated proteins and palmitoylcysteine. This Homo sapiens (Human) protein is Palmitoyl-protein thioesterase 1 (PPT1).